We begin with the raw amino-acid sequence, 500 residues long: L-2-amino-4-chloropent-4-enoate dechlorinase/desaturase (500 aa).

Lys-311 is modified (N6-(pyridoxal phosphate)lysine).

This sequence belongs to the trans-sulfuration enzymes family. The cofactor is pyridoxal 5'-phosphate.

The catalysed reaction is L-2-amino-4-chloropent-4-enoate = L-propargylglycine + chloride + H(+). Its pathway is amino-acid metabolism. It participates in antibiotic biosynthesis. Involved in the biosynthesis of terminal alkyne-containing amino acids such as L-propargylglycine (Pra) and L-beta-ethynylserine, that are produced as antibiotics by S.cattleya. Catalyzes gamma-elimination of chloride from 4-chloro-allyl-L-glycine (also named L-2-amino-4-chloropent-4-enoate), followed by an isomerization, to form the terminal-alkyne product L-propargylglycine. In Streptantibioticus cattleyicolor (strain ATCC 35852 / DSM 46488 / JCM 4925 / NBRC 14057 / NRRL 8057) (Streptomyces cattleya), this protein is L-2-amino-4-chloropent-4-enoate dechlorinase/desaturase.